A 764-amino-acid polypeptide reads, in one-letter code: Chloride anion exchanger (764 aa).

The Cytoplasmic segment spans residues 1 to 76 (MIEPFGNQYI…YRLKEWLLSD (76 aa)). The helical transmembrane segment at 77–97 (IVSGISTGIVAVLQGLAFALL) threads the bilayer. Residues 98–99 (VD) lie on the Extracellular side of the membrane. The helical transmembrane segment at 100-120 (IPPVYGLYASFFPAIIYLFFG) threads the bilayer. Over 121–124 (TSRH) the chain is Cytoplasmic. The helical transmembrane segment at 125-145 (ISVGPFPILSMMVGLAVSGAV) threads the bilayer. The Extracellular portion of the chain corresponds to 146–175 (SKAVPDRNATTLGLPNNSNNSSLLDDERVR). Asparagine 153, asparagine 161, and asparagine 165 each carry an N-linked (GlcNAc...) asparagine glycan. Residues 176-196 (VAAAASVTVLSGIIQLAFGIL) form a helical membrane-spanning segment. Position 197 (arginine 197) is a topological domain, cytoplasmic. The chain crosses the membrane as a helical span at residues 198 to 218 (IGFVVIYLSESLISGFTTAAA). Residues 219–257 (VHVLVSQLKFIFQLTVPSHTDPVSIFKVLYSVFSQIEKT) are Extracellular-facing. Residues 258-278 (NIADLVTALIVLLVVSIVKEI) traverse the membrane as a helical segment. Over 279 to 342 (NQRFKDKLPV…VETFQNTVGD (64 aa)) the chain is Cytoplasmic. Residues 343–363 (CFGIAMVAFAVAFSVASVYSL) traverse the membrane as a helical segment. The Extracellular portion of the chain corresponds to 364 to 374 (KYDYPLDGNQE). Residues 375–395 (LIALGLGNIVCGVFRGFAGST) traverse the membrane as a helical segment. Residues 396–411 (ALSRSAVQESTGGKTQ) lie on the Cytoplasmic side of the membrane. The chain crosses the membrane as a helical span at residues 412-432 (IAGLIGAIIVLIVVLAIGFLL). At 433-469 (APLQKSVLAALALGNLKGMLMQFAEIGRLWRKDKYDC) the chain is on the extracellular side. A helical membrane pass occupies residues 470–490 (LIWIMTFIFTIVLGLGLGLAA). Residues 491 to 701 (SVAFQLLTIV…EKLNRYEFFD (211 aa)) lie on the Cytoplasmic side of the membrane. Residues 525-720 (DYYDMYEPEG…LTIHDAVLHI (196 aa)) form the STAS domain. Residues 761-764 (ETKF) carry the PDZ-binding motif.

Belongs to the SLC26A/SulP transporter (TC 2.A.53) family. As to quaternary structure, interacts with CFTR, SLC26A6 and NHERF1. Interacts with PDZK1. Interacts (via PDZ-binding motif) with NHERF4 (via the third PDZ domain); interaction leads to decreased expression of SLC26A3 on the cell membrane resulting in its reduced exchanger activity. Post-translationally, N-glycosylation is required for efficient cell surface expression, and protection from proteolytic degradation. As to expression, expressed in the colon. Expression is significantly decreased in adenomas (polyps) and adenocarcinomas of the colon.

The protein localises to the apical cell membrane. The protein resides in the membrane. Its subcellular location is the cell membrane. It catalyses the reaction hydrogencarbonate(in) + 2 chloride(out) = hydrogencarbonate(out) + 2 chloride(in). Inhibited by acidic pH. Functionally, mediates chloride-bicarbonate exchange with a chloride bicarbonate stoichiometry of 2:1 in the intestinal epithelia. Plays a role in the chloride and bicarbonate homeostasis during sperm epididymal maturation and capacitation. The sequence is that of Chloride anion exchanger (SLC26A3) from Homo sapiens (Human).